Here is a 198-residue protein sequence, read N- to C-terminus: Nucleoid occlusion factor SlmA (198 aa).

Positions 9-70 constitute an HTH tetR-type domain; it reads RNRREEILQA…SLIEFIEDTL (62 aa). A DNA-binding region (H-T-H motif) is located at residues 33–52; that stretch reads TTAKLAANVGVSEAALYRHF. Residues 117 to 144 are a coiled coil; that stretch reads EQDRLQGRINQLFERIEAQLRQVLKERR.

Belongs to the nucleoid occlusion factor SlmA family. Homodimer. Interacts with FtsZ.

It localises to the cytoplasm. The protein localises to the nucleoid. Its function is as follows. Required for nucleoid occlusion (NO) phenomenon, which prevents Z-ring formation and cell division over the nucleoid. Acts as a DNA-associated cell division inhibitor that binds simultaneously chromosomal DNA and FtsZ, and disrupts the assembly of FtsZ polymers. SlmA-DNA-binding sequences (SBS) are dispersed on non-Ter regions of the chromosome, preventing FtsZ polymerization at these regions. This is Nucleoid occlusion factor SlmA from Edwardsiella ictaluri (strain 93-146).